Here is a 554-residue protein sequence, read N- to C-terminus: Arginine--tRNA ligase (554 aa).

A 'HIGH' region motif is present at residues 129 to 139 (ANPTGPLHIGH).

Belongs to the class-I aminoacyl-tRNA synthetase family. In terms of assembly, monomer.

The protein localises to the cytoplasm. It carries out the reaction tRNA(Arg) + L-arginine + ATP = L-arginyl-tRNA(Arg) + AMP + diphosphate. This chain is Arginine--tRNA ligase, found in Geobacter sp. (strain M21).